The following is an 875-amino-acid chain: Leucine--tRNA ligase (875 aa).

Residues 43–53 (PYPSGRIHIGH) carry the 'HIGH' region motif. The 'KMSKS' region motif lies at 631-635 (KMSKS). Lys634 is a binding site for ATP.

Belongs to the class-I aminoacyl-tRNA synthetase family.

It is found in the cytoplasm. The catalysed reaction is tRNA(Leu) + L-leucine + ATP = L-leucyl-tRNA(Leu) + AMP + diphosphate. This is Leucine--tRNA ligase from Mesorhizobium japonicum (strain LMG 29417 / CECT 9101 / MAFF 303099) (Mesorhizobium loti (strain MAFF 303099)).